Consider the following 365-residue polypeptide: NADH-quinone oxidoreductase subunit H (365 aa).

Helical transmembrane passes span 27 to 47 (LLLILAIIIPLLLAVAYLTFA), 99 to 119 (FLFLLAPILAITPALAAWAVV), 133 to 153 (ALLYILAMTSLGVYGVIIAGW), 168 to 188 (AAQVISYELAMGFALVCVLMM), 206 to 226 (FLNWYMIPLFPMFLVYFISGV), 268 to 288 (ILVATLASIMFLGGWLPPVDI), 294 to 314 (IPGVVWLLLKIAIMLFFFLWF), and 329 to 349 (LGWKVFIPITLIWIVLLGAVM).

It belongs to the complex I subunit 1 family. In terms of assembly, NDH-1 is composed of 14 different subunits. Subunits NuoA, H, J, K, L, M, N constitute the membrane sector of the complex.

The protein localises to the cell inner membrane. The catalysed reaction is a quinone + NADH + 5 H(+)(in) = a quinol + NAD(+) + 4 H(+)(out). Functionally, NDH-1 shuttles electrons from NADH, via FMN and iron-sulfur (Fe-S) centers, to quinones in the respiratory chain. The immediate electron acceptor for the enzyme in this species is believed to be ubiquinone. Couples the redox reaction to proton translocation (for every two electrons transferred, four hydrogen ions are translocated across the cytoplasmic membrane), and thus conserves the redox energy in a proton gradient. This subunit may bind ubiquinone. The sequence is that of NADH-quinone oxidoreductase subunit H from Nitrosomonas eutropha (strain DSM 101675 / C91 / Nm57).